Here is a 196-residue protein sequence, read N- to C-terminus: Imidazoleglycerol-phosphate dehydratase (196 aa).

The protein belongs to the imidazoleglycerol-phosphate dehydratase family.

The protein localises to the cytoplasm. It catalyses the reaction D-erythro-1-(imidazol-4-yl)glycerol 3-phosphate = 3-(imidazol-4-yl)-2-oxopropyl phosphate + H2O. It participates in amino-acid biosynthesis; L-histidine biosynthesis; L-histidine from 5-phospho-alpha-D-ribose 1-diphosphate: step 6/9. This is Imidazoleglycerol-phosphate dehydratase from Halobacterium salinarum (strain ATCC 700922 / JCM 11081 / NRC-1) (Halobacterium halobium).